We begin with the raw amino-acid sequence, 396 residues long: 1-deoxy-D-xylulose 5-phosphate reductoisomerase (396 aa).

Residues Thr-15, Gly-16, Ser-17, Ile-18, Gly-41, and Asn-129 each coordinate NADPH. 1-deoxy-D-xylulose 5-phosphate is bound at residue Lys-130. Glu-131 is a binding site for NADPH. Position 155 (Asp-155) interacts with Mn(2+). The 1-deoxy-D-xylulose 5-phosphate site is built by Ser-156, Glu-157, Ser-182, and His-205. A Mn(2+)-binding site is contributed by Glu-157. Gly-211 is an NADPH binding site. 1-deoxy-D-xylulose 5-phosphate-binding residues include Ser-218, Asn-223, Lys-224, and Glu-227. Glu-227 provides a ligand contact to Mn(2+).

The protein belongs to the DXR family. Mg(2+) is required as a cofactor. The cofactor is Mn(2+).

It carries out the reaction 2-C-methyl-D-erythritol 4-phosphate + NADP(+) = 1-deoxy-D-xylulose 5-phosphate + NADPH + H(+). The protein operates within isoprenoid biosynthesis; isopentenyl diphosphate biosynthesis via DXP pathway; isopentenyl diphosphate from 1-deoxy-D-xylulose 5-phosphate: step 1/6. Functionally, catalyzes the NADPH-dependent rearrangement and reduction of 1-deoxy-D-xylulose-5-phosphate (DXP) to 2-C-methyl-D-erythritol 4-phosphate (MEP). The chain is 1-deoxy-D-xylulose 5-phosphate reductoisomerase from Xanthomonas euvesicatoria pv. vesicatoria (strain 85-10) (Xanthomonas campestris pv. vesicatoria).